Here is a 234-residue protein sequence, read N- to C-terminus: Large ribosomal subunit protein bL25 (234 aa).

Belongs to the bacterial ribosomal protein bL25 family. CTC subfamily. As to quaternary structure, part of the 50S ribosomal subunit; part of the 5S rRNA/L5/L18/L25 subcomplex. Contacts the 5S rRNA. Binds to the 5S rRNA independently of L5 and L18.

Functionally, this is one of the proteins that binds to the 5S RNA in the ribosome where it forms part of the central protuberance. This is Large ribosomal subunit protein bL25 from Rhodopseudomonas palustris (strain BisA53).